Consider the following 740-residue polypeptide: ATP-dependent RNA helicase DDX1 (740 aa).

The interval 1-448 (MAAFSEMGVM…ETVHHVVVIV (448 aa)) is interaction with dsRNA. A Helicase ATP-binding domain is found at 2–428 (AAFSEMGVMP…SEKIMHFPTW (427 aa)). 46–53 (AETGSGKT) is a binding site for ATP. The B30.2/SPRY domain occupies 70-247 (DQMEGKKGKA…LKFNFGEEDF (178 aa)). A DEAD box motif is present at residues 370-373 (DEAD). The Helicase C-terminal domain occupies 493–681 (KGEYTVRAIK…QVEPDIKVPV (189 aa)).

Belongs to the DEAD box helicase family. DDX1 subfamily. In terms of tissue distribution, detected in embryonic retina, brain, heart and liver (at protein level). Detected in embryonic retina, brain, heart, kidney and liver.

It localises to the nucleus. It is found in the cytoplasm. Its subcellular location is the cytoplasmic granule. The protein resides in the cytosol. The protein localises to the mitochondrion. It carries out the reaction ATP + H2O = ADP + phosphate + H(+). In terms of biological role, acts as an ATP-dependent RNA helicase, able to unwind both RNA-RNA and RNA-DNA duplexes. Possesses 5' single-stranded RNA overhang nuclease activity. Acts as a positive regulator of transcription. May be involved in 3'-end cleavage and polyadenylation of pre-mRNAs. Binds DNA and RNA. Component of the tRNA-splicing ligase complex required to facilitate the enzymatic turnover of catalytic subunit RTCB. Binds (via helicase ATP-binding domain) on both short and long poly(I:C) dsRNA. The sequence is that of ATP-dependent RNA helicase DDX1 (DDX1) from Gallus gallus (Chicken).